Here is a 217-residue protein sequence, read N- to C-terminus: Adenylate kinase (217 aa).

An ATP-binding site is contributed by 10–15 (GAGKGT). Residues 30 to 59 (STGDMFRAAMKEGTPLGLQAKEYIDRGDLV) form an NMP region. Residues threonine 31, arginine 36, 57–59 (DLV), 85–88 (GFPR), and glutamine 92 each bind AMP. Residues 126 to 163 (GRRICRNCGATYHLVFHPPAQPGVCDKCGGELYQRPDD) form an LID region. Arginine 127 is a binding site for ATP. The Zn(2+) site is built by cysteine 130 and cysteine 133. 136–137 (TY) is a binding site for ATP. Zn(2+)-binding residues include cysteine 150 and cysteine 153. Arginine 160 and arginine 171 together coordinate AMP. Glutamine 199 is a binding site for ATP.

Belongs to the adenylate kinase family. In terms of assembly, monomer.

The protein localises to the cytoplasm. It carries out the reaction AMP + ATP = 2 ADP. The protein operates within purine metabolism; AMP biosynthesis via salvage pathway; AMP from ADP: step 1/1. Catalyzes the reversible transfer of the terminal phosphate group between ATP and AMP. Plays an important role in cellular energy homeostasis and in adenine nucleotide metabolism. This chain is Adenylate kinase, found in Geobacillus thermodenitrificans (strain NG80-2).